We begin with the raw amino-acid sequence, 419 residues long: Inward rectifier potassium channel 16 (419 aa).

At 1-67 the chain is on the cytoplasmic side; the sequence is MSYYGSSYRI…MVDIFTTLVD (67 aa). A helical membrane pass occupies residues 68–94; sequence TKWRHMFVIFSLSYILSWLIFGSIFWL. Over 95 to 117 the chain is Extracellular; sequence IAFHHGDLLSDPDITPCVDNVHS. An intramembrane region (helical; Pore-forming) is located at residues 118 to 134; sequence FTAAFLFSLETQTTIGY. Positions 131–136 match the Selectivity filter motif; it reads TIGYGY. The Extracellular portion of the chain corresponds to 135-143; sequence GYRCVTEEC. The chain crosses the membrane as a helical span at residues 144-171; the sequence is SVAVLTVILQSILSCIINTFIIGAALAK. Residues 172 to 419 are Cytoplasmic-facing; it reads MATARKRAQT…LNRISMESQM (248 aa). 3 positions are modified to phosphoserine: Ser358, Ser374, and Ser376.

The protein belongs to the inward rectifier-type potassium channel (TC 1.A.2.1) family. KCNJ16 subfamily. In terms of assembly, it forms heteromeric channels with Kir4.1/KCNJ10; this interaction is required for KCNJ16 localization to the basolateral membrane in kidney cells. As a heteromer with KCNJ10, may interact with MAGI1; this interaction may facilitate KCNJ10/KCNJ16 potassium channel expression at the basolateral membrane in kidney cells. May form heteromers with Kir2.1/KCNJ2. Can form heteromeric channels with Kir4.2/KCNJ15. As to expression, abundantly expressed in the proximal and distal segments of the nephron.

It is found in the membrane. The protein resides in the basolateral cell membrane. It catalyses the reaction K(+)(in) = K(+)(out). Its activity is regulated as follows. Channel activity is strongly regulated by variations of cytosolic pH; channels are activated by alkaline and inhibited by acidic pH values. Activated by phosphatidylinositol 4,5 biphosphate (PtdIns(4,5)P2). Its function is as follows. Inward rectifier potassium channels are characterized by a greater tendency to allow potassium to flow into the cell rather than out of it. Their voltage dependence is regulated by the concentration of extracellular potassium; as external potassium is raised, the voltage range of the channel opening shifts to more positive voltages. The inward rectification is mainly due to the blockage of outward current by internal magnesium. KCNJ16 may be involved in the regulation of fluid and pH balance. In the kidney, together with KCNJ10, mediates basolateral K(+) recycling in distal tubules; this process is critical for Na(+) reabsorption at the tubules. The polypeptide is Inward rectifier potassium channel 16 (Kcnj16) (Mus musculus (Mouse)).